Reading from the N-terminus, the 274-residue chain is Diaminopimelate epimerase (274 aa).

3 residues coordinate substrate: Asn11, Gln44, and Asn64. Catalysis depends on Cys73, which acts as the Proton donor. Residues 74-75 (GN), Asn157, Asn190, and 208-209 (ER) contribute to the substrate site. Cys217 functions as the Proton acceptor in the catalytic mechanism. 218 to 219 (GS) provides a ligand contact to substrate.

Belongs to the diaminopimelate epimerase family. As to quaternary structure, homodimer.

Its subcellular location is the cytoplasm. It carries out the reaction (2S,6S)-2,6-diaminopimelate = meso-2,6-diaminopimelate. It participates in amino-acid biosynthesis; L-lysine biosynthesis via DAP pathway; DL-2,6-diaminopimelate from LL-2,6-diaminopimelate: step 1/1. Functionally, catalyzes the stereoinversion of LL-2,6-diaminopimelate (L,L-DAP) to meso-diaminopimelate (meso-DAP), a precursor of L-lysine and an essential component of the bacterial peptidoglycan. The chain is Diaminopimelate epimerase from Haemophilus influenzae (strain PittGG).